Reading from the N-terminus, the 513-residue chain is NADH-quinone oxidoreductase subunit N (513 aa).

14 helical membrane passes run 20–40 (SVGFFIPEIYLSLLFMILIVV), 49–69 (STLLSVFSLVGLAGSLYFIYQ), 88–108 (FAIFFKYFFVLSGMLAVVITM), 117–137 (ISSMGEYYALVVAMVVGMMMM), 144–164 (LMIFLSMELVSFTAFILAGYF), 178–198 (LIYGAVSSGLMIYGFSLIYGV), 219–239 (FVMLFAALLVLAGFGYKIGAV), 260–280 (LSVASKAAGFALLMRFVYVAL), 295–315 (WFTLLVILAVASMIYGNVVAL), 323–343 (LLAYSSIAHAGYALLGVIVMD), 351–371 (LFYLLSYLLMNFGAFFVVVLI), 394–414 (GAALTVFLISLVGLPPTIGFI), 429–451 (IFMWLALIGILTSVISLYYYMLI), and 474–494 (LVAQLFMGALMLLTIYFGLFF).

The protein belongs to the complex I subunit 2 family. As to quaternary structure, NDH-1 is composed of 14 different subunits. Subunits NuoA, H, J, K, L, M, N constitute the membrane sector of the complex.

It localises to the cell inner membrane. It catalyses the reaction a quinone + NADH + 5 H(+)(in) = a quinol + NAD(+) + 4 H(+)(out). Its function is as follows. NDH-1 shuttles electrons from NADH, via FMN and iron-sulfur (Fe-S) centers, to quinones in the respiratory chain. The immediate electron acceptor for the enzyme in this species is believed to be a menaquinone. Couples the redox reaction to proton translocation (for every two electrons transferred, four hydrogen ions are translocated across the cytoplasmic membrane), and thus conserves the redox energy in a proton gradient. This is NADH-quinone oxidoreductase subunit N from Chlorobium chlorochromatii (strain CaD3).